The following is a 340-amino-acid chain: Dihydroorotate dehydrogenase (quinone) (340 aa).

Residues Ala65–Lys69 and Thr89 contribute to the FMN site. Lys69 is a substrate binding site. Asn114 to Phe118 contacts substrate. FMN contacts are provided by Asn142 and Asn175. Asn175 contacts substrate. Ser178 serves as the catalytic Nucleophile. Position 180 (Asn180) interacts with substrate. Lys220 and Thr248 together coordinate FMN. Asn249–Thr250 provides a ligand contact to substrate. Residues Gly271, Gly300, and Tyr321 to Ser322 each bind FMN.

The protein belongs to the dihydroorotate dehydrogenase family. Type 2 subfamily. As to quaternary structure, monomer. The cofactor is FMN.

It is found in the cell membrane. It catalyses the reaction (S)-dihydroorotate + a quinone = orotate + a quinol. The protein operates within pyrimidine metabolism; UMP biosynthesis via de novo pathway; orotate from (S)-dihydroorotate (quinone route): step 1/1. Functionally, catalyzes the conversion of dihydroorotate to orotate with quinone as electron acceptor. The chain is Dihydroorotate dehydrogenase (quinone) from Actinobacillus succinogenes (strain ATCC 55618 / DSM 22257 / CCUG 43843 / 130Z).